A 121-amino-acid polypeptide reads, in one-letter code: Large ribosomal subunit protein bL12 (121 aa).

The protein belongs to the bacterial ribosomal protein bL12 family. As to quaternary structure, homodimer. Part of the ribosomal stalk of the 50S ribosomal subunit. Forms a multimeric L10(L12)X complex, where L10 forms an elongated spine to which 2 to 4 L12 dimers bind in a sequential fashion. Binds GTP-bound translation factors.

Its function is as follows. Forms part of the ribosomal stalk which helps the ribosome interact with GTP-bound translation factors. Is thus essential for accurate translation. In Baumannia cicadellinicola subsp. Homalodisca coagulata, this protein is Large ribosomal subunit protein bL12.